Here is a 614-residue protein sequence, read N- to C-terminus: UvrABC system protein C (614 aa).

The GIY-YIG domain occupies 25–103; the sequence is SVPGVYKMFG…IKSLKPKYNI (79 aa). In terms of domain architecture, UVR spans 214–249; the sequence is KEIQCELFEMMCRFSNNQDYESAIVCRDRLHALKSM.

Belongs to the UvrC family. Interacts with UvrB in an incision complex.

Its subcellular location is the cytoplasm. In terms of biological role, the UvrABC repair system catalyzes the recognition and processing of DNA lesions. UvrC both incises the 5' and 3' sides of the lesion. The N-terminal half is responsible for the 3' incision and the C-terminal half is responsible for the 5' incision. The polypeptide is UvrABC system protein C (Anaplasma phagocytophilum (strain HZ)).